The sequence spans 904 residues: Protein translocase subunit SecA (904 aa).

Residues Gln87, 105–109 (GEGKT), and Asp512 each bind ATP. A disordered region spans residues 851–870 (LARQQQLSHQTDNSALMSEE). Zn(2+)-binding residues include Cys888, Cys890, Cys899, and His900.

This sequence belongs to the SecA family. As to quaternary structure, monomer and homodimer. Part of the essential Sec protein translocation apparatus which comprises SecA, SecYEG and auxiliary proteins SecDF-YajC and YidC. Zn(2+) serves as cofactor.

It localises to the cell inner membrane. Its subcellular location is the cytoplasm. It catalyses the reaction ATP + H2O + cellular proteinSide 1 = ADP + phosphate + cellular proteinSide 2.. Its function is as follows. Part of the Sec protein translocase complex. Interacts with the SecYEG preprotein conducting channel. Has a central role in coupling the hydrolysis of ATP to the transfer of proteins into and across the cell membrane, serving both as a receptor for the preprotein-SecB complex and as an ATP-driven molecular motor driving the stepwise translocation of polypeptide chains across the membrane. This Yersinia pseudotuberculosis serotype O:1b (strain IP 31758) protein is Protein translocase subunit SecA.